We begin with the raw amino-acid sequence, 151 residues long: Epigen (151 aa).

The signal sequence occupies residues Met1 to Ser18. The Extracellular segment spans residues Glu19–Arg108. N-linked (GlcNAc...) asparagine glycosylation occurs at Asn39. Residues Leu54–Glu94 enclose the EGF-like domain. 3 disulfide bridges follow: Cys58–Cys71, Cys66–Cys82, and Cys84–Cys93. A helical transmembrane segment spans residues Tyr109–Cys129. The Cytoplasmic portion of the chain corresponds to Tyr130–Leu151.

It localises to the membrane. Promotes the growth of epithelial cells. The polypeptide is Epigen (EPGN) (Gallus gallus (Chicken)).